We begin with the raw amino-acid sequence, 72 residues long: Movement protein TGBp3 (72 aa).

Over 1–2 (MS) the chain is Lumenal. Residues 3-23 (LSFSLIVFAVGVAVSIGVLTL) traverse the membrane as a helical segment. Over 24–72 (TTQQSSSYCLILVDGAKAVVEGCHLRQDIPAILSELKPASSPFNPLFCS) the chain is Cytoplasmic.

This sequence belongs to the Tymovirales TGBp3 protein family.

It is found in the host endoplasmic reticulum membrane. Its function is as follows. Plays a role in viral cell-to-cell propagation, by facilitating genome transport to neighboring plant cells through plasmosdesmata. May induce the formation of granular vesicles derived from the Endoplasmic reticulum, which align on actin filaments. The protein is Movement protein TGBp3 (ORF4) of Lolium latent virus (isolate Lolium/USA/US1/-) (LoLV).